The following is a 421-amino-acid chain: Subtilisin-like protease 2 (421 aa).

An N-terminal signal peptide occupies residues 1–16 (MQLLNFGLLLLPFVAG). A propeptide spanning residues 17-122 (DLAPQPEPLL…VHPDQHVYLA (106 aa)) is cleaved from the precursor. Residues 36-122 (QYIVTLKEGL…VHPDQHVYLA (87 aa)) enclose the Inhibitor I9 domain. A Peptidase S8 domain is found at 131–421 (RWGLGYMSSK…ERKFTLPKYY (291 aa)). Residues D169 and H201 each act as charge relay system in the active site. N-linked (GlcNAc...) asparagine glycosylation is found at N248, N261, and N348. The Charge relay system role is filled by S357. Residue N388 is glycosylated (N-linked (GlcNAc...) asparagine).

Belongs to the peptidase S8 family.

The protein resides in the secreted. Secreted subtilisin-like serine protease with keratinolytic activity that contributes to pathogenicity. This Arthroderma benhamiae (strain ATCC MYA-4681 / CBS 112371) (Trichophyton mentagrophytes) protein is Subtilisin-like protease 2 (SUB2).